Reading from the N-terminus, the 371-residue chain is Chaperone protein DnaJ (371 aa).

A J domain is found at 5-70; sequence DYYEVLGVNR…QKRAAYDQYG (66 aa). The segment at 31–52 is disordered; the sequence is KYHPDRNPDNPKAEESFKEAKE. Residues 32–52 are compositionally biased toward basic and acidic residues; the sequence is YHPDRNPDNPKAEESFKEAKE. The CR-type zinc-finger motif lies at 132-210; the sequence is RTETKIRIPV…CQGAGRVKKH (79 aa). Zn(2+)-binding residues include cysteine 145, cysteine 148, cysteine 162, cysteine 165, cysteine 184, cysteine 187, cysteine 198, and cysteine 201. CXXCXGXG motif repeat units follow at residues 145–152, 162–169, 184–191, and 198–205; these read CETCHGSG, CTTCGGHG, CPKCHGSG, and CPSCQGAG.

The protein belongs to the DnaJ family. Homodimer. It depends on Zn(2+) as a cofactor.

The protein resides in the cytoplasm. Functionally, participates actively in the response to hyperosmotic and heat shock by preventing the aggregation of stress-denatured proteins and by disaggregating proteins, also in an autonomous, DnaK-independent fashion. Unfolded proteins bind initially to DnaJ; upon interaction with the DnaJ-bound protein, DnaK hydrolyzes its bound ATP, resulting in the formation of a stable complex. GrpE releases ADP from DnaK; ATP binding to DnaK triggers the release of the substrate protein, thus completing the reaction cycle. Several rounds of ATP-dependent interactions between DnaJ, DnaK and GrpE are required for fully efficient folding. Also involved, together with DnaK and GrpE, in the DNA replication of plasmids through activation of initiation proteins. The protein is Chaperone protein DnaJ of Methylovorus sp. (strain SS1 / DSM 11726).